A 375-amino-acid polypeptide reads, in one-letter code: Probable mitochondrial tRNA-specific 2-thiouridylase 1 (375 aa).

Residues 7–14 and Met-33 contribute to the ATP site; that span reads GMSGGVDS. Residues 94–96 form an interaction with target base in tRNA region; the sequence is VPD. Cys-99 serves as the catalytic Nucleophile. A disulfide bond links Cys-99 and Cys-205. Gly-124 is an ATP binding site. Residues 154–156 form an interaction with tRNA region; the sequence is KDQ. Catalysis depends on Cys-205, which acts as the Cysteine persulfide intermediate. The interaction with tRNA stretch occupies residues 319-320; that stretch reads QR.

Belongs to the MnmA/TRMU family.

The protein resides in the mitochondrion. It carries out the reaction 5-taurinomethyluridine(34) in tRNA + S-sulfanyl-L-cysteinyl-[protein] + AH2 + ATP = 5-taurinomethyl-2-thiouridine(34) in tRNA + L-cysteinyl-[protein] + A + AMP + diphosphate + H(+). Catalyzes the 2-thiolation of uridine at the wobble position (U34) of mitochondrial tRNA(Lys), tRNA(Glu) and tRNA(Gln). Required for the formation of 5-taurinomethyl-2-thiouridine (tm5s2U) of mitochondrial tRNA(Lys), tRNA(Glu), and tRNA(Gln) at the wobble position. ATP is required to activate the C2 atom of the wobble base. This chain is Probable mitochondrial tRNA-specific 2-thiouridylase 1, found in Caenorhabditis elegans.